Here is a 32-residue protein sequence, read N- to C-terminus: uncharacterized protein (32 aa).

This is an uncharacterized protein from Enterobacteria phage T4 (Bacteriophage T4).